Consider the following 216-residue polypeptide: Pyridoxine/pyridoxamine 5'-phosphate oxidase (216 aa).

Residues Arg9–Tyr12 and Arg67 each bind substrate. FMN-binding positions include Arg62–Arg67, Tyr77–Thr78, Lys84, and Gln106. 3 residues coordinate substrate: Tyr124, Arg128, and Ser132. Residues Gln142–Ser143 and Trp188 each bind FMN. Substrate is bound at residue Arg194–His196. Residue Arg198 coordinates FMN.

The protein belongs to the pyridoxamine 5'-phosphate oxidase family. Homodimer. FMN serves as cofactor.

It catalyses the reaction pyridoxamine 5'-phosphate + O2 + H2O = pyridoxal 5'-phosphate + H2O2 + NH4(+). It carries out the reaction pyridoxine 5'-phosphate + O2 = pyridoxal 5'-phosphate + H2O2. Its pathway is cofactor metabolism; pyridoxal 5'-phosphate salvage; pyridoxal 5'-phosphate from pyridoxamine 5'-phosphate: step 1/1. It participates in cofactor metabolism; pyridoxal 5'-phosphate salvage; pyridoxal 5'-phosphate from pyridoxine 5'-phosphate: step 1/1. In terms of biological role, catalyzes the oxidation of either pyridoxine 5'-phosphate (PNP) or pyridoxamine 5'-phosphate (PMP) into pyridoxal 5'-phosphate (PLP). This chain is Pyridoxine/pyridoxamine 5'-phosphate oxidase, found in Psychrobacter arcticus (strain DSM 17307 / VKM B-2377 / 273-4).